A 246-amino-acid chain; its full sequence is Pyridoxine 5'-phosphate synthase (246 aa).

Asn12 serves as a coordination point for 3-amino-2-oxopropyl phosphate. Residue 14–15 (DH) participates in 1-deoxy-D-xylulose 5-phosphate binding. Arg23 provides a ligand contact to 3-amino-2-oxopropyl phosphate. His48 serves as the catalytic Proton acceptor. Residues Arg50 and His55 each contribute to the 1-deoxy-D-xylulose 5-phosphate site. The active-site Proton acceptor is Glu75. Thr105 serves as a coordination point for 1-deoxy-D-xylulose 5-phosphate. His196 (proton donor) is an active-site residue. Residues Gly197 and 218-219 (GH) contribute to the 3-amino-2-oxopropyl phosphate site.

Belongs to the PNP synthase family. Homooctamer; tetramer of dimers.

The protein localises to the cytoplasm. The catalysed reaction is 3-amino-2-oxopropyl phosphate + 1-deoxy-D-xylulose 5-phosphate = pyridoxine 5'-phosphate + phosphate + 2 H2O + H(+). The protein operates within cofactor biosynthesis; pyridoxine 5'-phosphate biosynthesis; pyridoxine 5'-phosphate from D-erythrose 4-phosphate: step 5/5. Catalyzes the complicated ring closure reaction between the two acyclic compounds 1-deoxy-D-xylulose-5-phosphate (DXP) and 3-amino-2-oxopropyl phosphate (1-amino-acetone-3-phosphate or AAP) to form pyridoxine 5'-phosphate (PNP) and inorganic phosphate. This chain is Pyridoxine 5'-phosphate synthase, found in Pseudomonas syringae pv. tomato (strain ATCC BAA-871 / DC3000).